The following is a 329-amino-acid chain: Large ribosomal subunit protein uL3 (329 aa).

It belongs to the universal ribosomal protein uL3 family. As to quaternary structure, part of the 50S ribosomal subunit. Forms a cluster with proteins L14 and L24e.

One of the primary rRNA binding proteins, it binds directly near the 3'-end of the 23S rRNA, where it nucleates assembly of the 50S subunit. The polypeptide is Large ribosomal subunit protein uL3 (Picrophilus torridus (strain ATCC 700027 / DSM 9790 / JCM 10055 / NBRC 100828 / KAW 2/3)).